The following is a 596-amino-acid chain: Aspartate--tRNA(Asp/Asn) ligase (596 aa).

Glu-169 lines the L-aspartate pocket. The segment at 193–196 (QLFK) is aspartate. An L-aspartate-binding site is contributed by Arg-215. ATP-binding positions include 215–217 (RDE) and Gln-224. Residue His-447 participates in L-aspartate binding. Residue Glu-481 participates in ATP binding. L-aspartate is bound at residue Arg-488. 533 to 536 (GWDR) contacts ATP. Residues 559-596 (GYDPLTQAPAPITAQQRKEAGVDFKPEAKKADPGATKA) form a disordered region. The span at 574 to 590 (QRKEAGVDFKPEAKKAD) shows a compositional bias: basic and acidic residues.

The protein belongs to the class-II aminoacyl-tRNA synthetase family. Type 1 subfamily. Homodimer.

It localises to the cytoplasm. The catalysed reaction is tRNA(Asx) + L-aspartate + ATP = L-aspartyl-tRNA(Asx) + AMP + diphosphate. Its function is as follows. Aspartyl-tRNA synthetase with relaxed tRNA specificity since it is able to aspartylate not only its cognate tRNA(Asp) but also tRNA(Asn). Reaction proceeds in two steps: L-aspartate is first activated by ATP to form Asp-AMP and then transferred to the acceptor end of tRNA(Asp/Asn). The protein is Aspartate--tRNA(Asp/Asn) ligase of Arthrobacter sp. (strain FB24).